Reading from the N-terminus, the 929-residue chain is Isoleucine--tRNA ligase (929 aa).

The 'HIGH' region motif lies at 58–68 (PYANGDIHIGH). Glutamate 563 serves as a coordination point for L-isoleucyl-5'-AMP. The 'KMSKS' region motif lies at 605-609 (KMSKS). Lysine 608 lines the ATP pocket. Zn(2+)-binding residues include cysteine 892, cysteine 895, cysteine 912, and cysteine 915.

This sequence belongs to the class-I aminoacyl-tRNA synthetase family. IleS type 1 subfamily. In terms of assembly, monomer. The cofactor is Zn(2+).

The protein localises to the cytoplasm. The enzyme catalyses tRNA(Ile) + L-isoleucine + ATP = L-isoleucyl-tRNA(Ile) + AMP + diphosphate. Catalyzes the attachment of isoleucine to tRNA(Ile). As IleRS can inadvertently accommodate and process structurally similar amino acids such as valine, to avoid such errors it has two additional distinct tRNA(Ile)-dependent editing activities. One activity is designated as 'pretransfer' editing and involves the hydrolysis of activated Val-AMP. The other activity is designated 'posttransfer' editing and involves deacylation of mischarged Val-tRNA(Ile). The sequence is that of Isoleucine--tRNA ligase from Neisseria meningitidis serogroup C (strain 053442).